A 474-amino-acid chain; its full sequence is MAQLEGYYFSAALSCTFLVSCLLFSAFSRALREPYMDEIFHLPQAQRYCEGRFSLSQWDPMITTLPGLYLVSVGVVKPASWILGWSEHVVCSIGMLRFVNLLFSVGNFYLLYLLFRKIQPRNKASSSIQRILSTLTLAVFPTLYFFNFLYYTEAGSVFFTLFAYLMCLYGNHRTSALLGFCGFMFRQTNIIWAAFCAGHIIAQKCSEAWKTELQKKKEERLPPAKGPLSELRRVLQFLLMYSMSLKNLSMLFLLTWPYMLLLLAFFVFVVVNGGIVVGDRSSHEACLHFPQLFYFFSFTAFFSFPHLLSPTKVKTFLSLVWKRRVQFSVITLVSVFLVWKFTYVHKYLLADNRHYTFYVWKRVFQRHEIVKYLLVPAYMFAGWAVADSLKSKSIFWNLMFFVCLVASTVPQKLLEFRYFILPYIIYRLNMPLPPISRLVCELGCYAVVNFLTFYIFLNKTFQWSDSHDIQRFMW.

The Cytoplasmic segment spans residues 1–6; the sequence is MAQLEG. The chain crosses the membrane as a helical span at residues 7-27; the sequence is YYFSAALSCTFLVSCLLFSAF. Residues 28 to 64 lie on the Extracellular side of the membrane; that stretch reads SRALREPYMDEIFHLPQAQRYCEGRFSLSQWDPMITT. The helical transmembrane segment at 65-85 threads the bilayer; sequence LPGLYLVSVGVVKPASWILGW. The Cytoplasmic segment spans residues 86–97; the sequence is SEHVVCSIGMLR. A helical transmembrane segment spans residues 98-118; sequence FVNLLFSVGNFYLLYLLFRKI. The Extracellular segment spans residues 119 to 126; it reads QPRNKASS. A helical transmembrane segment spans residues 127 to 147; that stretch reads SIQRILSTLTLAVFPTLYFFN. Residues 148 to 150 are Cytoplasmic-facing; that stretch reads FLY. Residues 151–171 traverse the membrane as a helical segment; sequence YTEAGSVFFTLFAYLMCLYGN. The Extracellular segment spans residues 172–175; the sequence is HRTS. The helical transmembrane segment at 176-196 threads the bilayer; it reads ALLGFCGFMFRQTNIIWAAFC. Topologically, residues 197–256 are cytoplasmic; the sequence is AGHIIAQKCSEAWKTELQKKKEERLPPAKGPLSELRRVLQFLLMYSMSLKNLSMLFLLTW. A helical transmembrane segment spans residues 257–277; that stretch reads PYMLLLLAFFVFVVVNGGIVV. Over 278–283 the chain is Extracellular; the sequence is GDRSSH. Residues 284–304 form a helical membrane-spanning segment; the sequence is EACLHFPQLFYFFSFTAFFSF. At 305-317 the chain is on the cytoplasmic side; it reads PHLLSPTKVKTFL. The chain crosses the membrane as a helical span at residues 318 to 338; it reads SLVWKRRVQFSVITLVSVFLV. Topologically, residues 339–365 are extracellular; sequence WKFTYVHKYLLADNRHYTFYVWKRVFQ. The chain crosses the membrane as a helical span at residues 366–386; it reads RHEIVKYLLVPAYMFAGWAVA. The Cytoplasmic segment spans residues 387-392; sequence DSLKSK. Residues 393-413 form a helical membrane-spanning segment; it reads SIFWNLMFFVCLVASTVPQKL. Residues 414 to 436 lie on the Extracellular side of the membrane; it reads LEFRYFILPYIIYRLNMPLPPIS. A helical transmembrane segment spans residues 437–457; that stretch reads RLVCELGCYAVVNFLTFYIFL. Residues 458-473 are Cytoplasmic-facing; that stretch reads NKTFQWSDSHDIQRFM.

The protein belongs to the ALG10 glucosyltransferase family. Interacts with KCNH1; may regulate KCNH1, possibly by regulating its N-glycosylation. Interacts with KCNH2; may reduce KCNH2 sensitivity to classic proarrhythmic drug blockade, possibly by regulating its N-glycosylation. As to expression, highly expressed in brain, skeletal muscle, uterus, small intestine and liver. Moderately expressed in lung and kidney. Weakly expressed in heart and stomach.

It is found in the endoplasmic reticulum membrane. It carries out the reaction an alpha-D-Glc-(1-&gt;3)-alpha-D-Glc-(1-&gt;3)-alpha-D-Man-(1-&gt;2)-alpha-D-Man-(1-&gt;2)-alpha-D-Man-(1-&gt;3)-[alpha-D-Man-(1-&gt;2)-alpha-D-Man-(1-&gt;3)-[alpha-D-Man-(1-&gt;2)-alpha-D-Man-(1-&gt;6)]-alpha-D-Man-(1-&gt;6)]-beta-D-Man-(1-&gt;4)-beta-D-GlcNAc-(1-&gt;4)-alpha-D-GlcNAc-diphospho-di-trans,poly-cis-dolichol + a di-trans,poly-cis-dolichyl beta-D-glucosyl phosphate = a alpha-D-Glc-(1-&gt;2)-alpha-D-Glc-(1-&gt;3)-alpha-D-Glc-(1-&gt;3)-alpha-D-Man-(1-&gt;2)-alpha-D-Man-(1-&gt;2)-alpha-D-Man-(1-&gt;3)-[alpha-D-Man-(1-&gt;2)-alpha-D-Man-(1-&gt;3)-[alpha-D-Man-(1-&gt;2)-alpha-D-Man-(1-&gt;6)]-alpha-D-Man-(1-&gt;6)]-beta-D-Man-(1-&gt;4)-beta-D-GlcNAc-(1-&gt;4)-alpha-D-GlcNAc-diphospho-di-trans,poly-cis-dolichol + a di-trans,poly-cis-dolichyl phosphate + H(+). It participates in protein modification; protein glycosylation. Its function is as follows. Dol-P-Glc:Glc(2)Man(9)GlcNAc(2)-PP-Dol alpha-1,2-glucosyltransferase that operates in the biosynthetic pathway of dolichol-linked oligosaccharides, the glycan precursors employed in protein asparagine (N)-glycosylation. The assembly of dolichol-linked oligosaccharides begins on the cytosolic side of the endoplasmic reticulum membrane and finishes in its lumen. The sequential addition of sugars to dolichol pyrophosphate produces dolichol-linked oligosaccharides containing fourteen sugars, including two GlcNAcs, nine mannoses and three glucoses. Once assembled, the oligosaccharide is transferred from the lipid to nascent proteins by oligosaccharyltransferases. In the lumen of the endoplasmic reticulum, adds the third and last glucose residue from dolichyl phosphate glucose (Dol-P-Glc) onto the lipid-linked oligosaccharide intermediate Glc(2)Man(9)GlcNAc(2)-PP-Dol to produce Glc(3)Man(9)GlcNAc(2)-PP-Dol. This is Dol-P-Glc:Glc(2)Man(9)GlcNAc(2)-PP-Dol alpha-1,2-glucosyltransferase from Rattus norvegicus (Rat).